The primary structure comprises 233 residues: MQNQRNEYSISLRNLSYIILTISTGIVIHRKFRRIKDIEDLSSRFFRGQQKSLTKLNSLYGYVTSVGDGDNFRFYHTPGGRLLGWHWLRKVPSNRNALKNETLSIRLSGIDAPESGYFGKLGQPFSLEAKQFLARKLEHRSVRVYPLHRDQYNRAVCGVTYYPIRWLFFKRDIGPQLVSRGLAVVYEGANSSYYPTEKSVLMKIQETARKRKLGMHSLGNKLELPKDYKKRNK.

Residues 10–29 (ISLRNLSYIILTISTGIVIH) traverse the membrane as a helical segment. In terms of domain architecture, TNase-like spans 57 to 218 (NSLYGYVTSV…RKRKLGMHSL (162 aa)). The active site involves Arg-106. Asp-111 is a binding site for Ca(2+). Residues Glu-114 and Arg-154 contribute to the active site.

It belongs to the LCL3 family.

It is found in the mitochondrion. Its subcellular location is the membrane. This chain is Probable endonuclease lcl3 (lcl3), found in Schizosaccharomyces japonicus (strain yFS275 / FY16936) (Fission yeast).